The sequence spans 658 residues: MFKNEYQGGAFVEIFSAQGKNPGAKWKILGSPSVIWKEFDKEVKSFVFVLEGSSQTNRIQLPKENKQILGLIQRFLVLQIYVPLGQDFSTELLITDLGNIKRRLYLSTVHKEVSSTPLHAKIPLFMIKRKIWCNLCIDLVAFTSEIFKGAVFQSLDGIIVSANCKLRKIFTLKFKPRETADRDDEPADIIPRSCQLATDVPHVTQLLNMTKLRQTEIKFGGHPLRSAESDQFISSRAGSVRSSKSQDVCHIAFGSRVLGPPPPSGRRNNLRLSAETVRSIGYKNNQSCQQPAEEKHVNSADTSALLIPLSEQQGEKGSSHPVKQTTPLPASLPTPYPHPPRDPSADKGSSRRGLGLRSSSGSRTEARCGSSSGNSRSEEDVAMAANNLTQLTTEPVRASTPEPPAAEPPDEWIFPESSGPPSGAAGSSSSLLLDGDSRTASHLWLETSKDSDPDQAEGTQMAPKDIFTFSSRPRSAPHGKSHDLSPTGCPCILDPKEDSRVTKGDTELEDDFYGSDSSEEEYNWRNYQPSQMSESELQMLASLRRQQNEDLEDTGAPHGLSASQVDNCNVSISTSSDDTTTWNSCLPPPVNQGRHYQKEMNPPSPSNPRDWLNMLSPPIVPPSQQPLEQSLDSSASLSVQGGALLLTQPHLASCAVGC.

Disordered regions lie at residues 312–522 (QQGE…EEEY) and 589–634 (PVNQ…LDSS). Residues 319-328 (SHPVKQTTPL) are compositionally biased toward polar residues. Basic and acidic residues predominate over residues 339–349 (PPRDPSADKGS). Composition is skewed to low complexity over residues 351-363 (RRGLGLRSSSGSR) and 417-434 (SSGPPSGAAGSSSSLLLD). A compositionally biased stretch (basic and acidic residues) spans 494–506 (DPKEDSRVTKGDT). The span at 507–521 (ELEDDFYGSDSSEEE) shows a compositional bias: acidic residues. Residues 625–634 (QPLEQSLDSS) are compositionally biased toward polar residues.

This is Protein CFAP20DC from Rattus norvegicus (Rat).